Consider the following 139-residue polypeptide: DNA-directed RNA polymerase II subunit Rpb4 (139 aa).

It belongs to the eukaryotic RPB4 RNA polymerase subunit family. RNA polymerase II consists of 12 different subunits.

Its subcellular location is the nucleus. It localises to the chromosome. Functionally, DNA-dependent RNA polymerase catalyzes the transcription of DNA into RNA using the four ribonucleoside triphosphates as substrates. Associates with POLR2G. This is DNA-directed RNA polymerase II subunit Rpb4 from Drosophila melanogaster (Fruit fly).